The primary structure comprises 274 residues: Protein YeeZ (274 aa).

A signal peptide spans 1–24 (MKKVAIVGLGWLGMPLAMSLSARG). 170-177 (GRFFAGKT) lines the ATP pocket.

This is Protein YeeZ (yeeZ) from Escherichia coli O157:H7.